A 226-amino-acid polypeptide reads, in one-letter code: Cytidylate kinase (226 aa).

10–18 (GPASSGKST) provides a ligand contact to ATP.

Belongs to the cytidylate kinase family. Type 1 subfamily.

The protein resides in the cytoplasm. The catalysed reaction is CMP + ATP = CDP + ADP. It catalyses the reaction dCMP + ATP = dCDP + ADP. This Streptococcus thermophilus (strain CNRZ 1066) protein is Cytidylate kinase.